A 1179-amino-acid chain; its full sequence is Integrin alpha-E (1179 aa).

The N-terminal stretch at 1–18 is a signal peptide; the sequence is MWLFHTLLCIASLALLAA. The Extracellular segment spans residues 19–1124; it reads FNVDVARPWL…VFLKDEKYHS (1106 aa). FG-GAP repeat units follow at residues 22–79 and 80–138; these read DVAR…EILC and HPVE…PQAQ. N-linked (GlcNAc...) asparagine glycosylation occurs at asparagine 49. 2 cysteine pairs are disulfide-bonded: cysteine 70/cysteine 79 and cysteine 126/cysteine 159. Positions 145-199 are X-domain (extra domain); the sequence is ENLLDPDARVDTGDCYSNKEGGGEDDVNTARQRRALEKEEEEDKEEEEDEEEEEA. Residues 158–200 are disordered; the sequence is DCYSNKEGGGEDDVNTARQRRALEKEEEEDKEEEEDEEEEEAG. The segment covering 182 to 200 has biased composition (acidic residues); sequence KEEEEDKEEEEDEEEEEAG. The VWFA domain occupies 200 to 389; that stretch reads GTEIAIILDG…SKLRYNIISM (190 aa). 2 N-linked (GlcNAc...) asparagine glycosylation sites follow: asparagine 271 and asparagine 321. The FG-GAP 3 repeat unit spans residues 390 to 442; that stretch reads EGTVGDALHYQLAQIGFSAQILDERQVLLGAVGAFDWSGGALLYDTRSRRGRF. An N-linked (GlcNAc...) asparagine glycan is attached at asparagine 444. FG-GAP repeat units lie at residues 447–499, 500–560, 563–627, and 631–691; these read AAAA…GREA, SFLP…DGSF, ARIL…GLSA, and QRIR…FTPS. 12 residues coordinate Ca(2+): aspartate 522, aspartate 524, aspartate 526, aspartate 530, aspartate 586, serine 588, aspartate 590, aspartate 594, aspartate 654, serine 656, aspartate 658, and aspartate 662. Cysteine 706 and cysteine 762 are joined by a disulfide. 2 N-linked (GlcNAc...) asparagine glycosylation sites follow: asparagine 726 and asparagine 782. Cysteine 823 and cysteine 829 are disulfide-bonded. Residue asparagine 857 is glycosylated (N-linked (GlcNAc...) asparagine). An intrachain disulfide couples cysteine 893 to cysteine 907. Asparagine 934 and asparagine 954 each carry an N-linked (GlcNAc...) asparagine glycan. Cystine bridges form between cysteine 1008–cysteine 1033 and cysteine 1041–cysteine 1057. N-linked (GlcNAc...) asparagine glycans are attached at residues asparagine 1065 and asparagine 1096. A helical transmembrane segment spans residues 1125-1147; that stretch reads LPIIIKGSVGGLLVLIVILVILF. The Cytoplasmic segment spans residues 1148–1179; the sequence is KCGFFKRKYQQLNLESIRKAQLKSENLLEEEN. Residues 1150-1154 carry the GFFKR motif motif; sequence GFFKR.

It belongs to the integrin alpha chain family. In terms of assembly, heterodimer of an alpha and a beta subunit. The alpha subunit is composed of a heavy and a light chains linked by a disulfide bond. Alpha-E associates with beta-7. Expressed on a subclass of T-lymphocytes known as intra-epithelial lymphocytes which are located between mucosal epithelial cells.

It is found in the membrane. Functionally, integrin alpha-E/beta-7 is a receptor for E-cadherin. It mediates adhesion of intra-epithelial T-lymphocytes to epithelial cell monolayers. This chain is Integrin alpha-E (ITGAE), found in Homo sapiens (Human).